A 101-amino-acid polypeptide reads, in one-letter code: MNKSKRLFTKSKRSFRRRLPPIQSGDRIDYRNMSLISRFISEQGKILSRRVNRVTLKQQRLITIAINQARILSLLPFLNNQKQFERSESTPRTTSLRTRKK.

Belongs to the bacterial ribosomal protein bS18 family. In terms of assembly, part of the 30S ribosomal subunit.

Its subcellular location is the plastid. The protein localises to the chloroplast. The chain is Small ribosomal subunit protein bS18c from Lepidium virginicum (Virginia pepperweed).